The chain runs to 65 residues: MKMSILFLFALIASLACLQLTFAAPAASPFANPGASPEAAPLADPLADPFMPISGMLMSGMLGKK.

Positions 1–23 are cleaved as a signal peptide; it reads MKMSILFLFALIASLACLQLTFA. 7 AXPX repeats span residues 23–26, 27–30, 31–34, 35–38, 39–42, 43–46, and 47–50; these read AAPA, ASPF, ANPG, ASPE, AAPL, ADPL, and ADPF. Residues 24-49 constitute a propeptide that is removed on maturation; it reads APAASPFANPGASPEAAPLADPLADP. A Leucine amide modification is found at L62.

It belongs to the MCD family. Mastoparan subfamily. In terms of tissue distribution, expressed by the venom gland.

It is found in the secreted. Antimicrobial peptide. Shows activity against both Gram-positive and -negative bacteria, as well against fungi. Also promotes important mast cell degranulation. Shows little hemolytic activity on rabbit and human erythrocytes. Its mast cell degranulation activity may be related to the activation of G-protein coupled receptors in mast cells as well as interaction with other proteins located in cell endosomal membranes in the mast cells. This Vespa bicolor (Black shield wasp) protein is VESP-VB2.